Here is a 431-residue protein sequence, read N- to C-terminus: V-type ATP synthase beta chain (431 aa).

Belongs to the ATPase alpha/beta chains family.

Its function is as follows. Produces ATP from ADP in the presence of a proton gradient across the membrane. The V-type beta chain is a regulatory subunit. This Treponema denticola (strain ATCC 35405 / DSM 14222 / CIP 103919 / JCM 8153 / KCTC 15104) protein is V-type ATP synthase beta chain.